Consider the following 149-residue polypeptide: MKCPFCSSEDTKVVDSRTTIDGSTKRRRECNNCLKRFSTYERFEESPIYVVKKDNRRVKYDREKLLRGLTFATAKRNVSREELDKIITDIERSLQNSLISEISSKDLGEKVLEKLRELDQVAYVRFASVYKEFDDIKSFIEIVEEIKKD.

Residues 3-33 (CPFCSSEDTKVVDSRTTIDGSTKRRRECNNC) fold into a zinc finger. Residues 48-138 (IYVVKKDNRR…VYKEFDDIKS (91 aa)) form the ATP-cone domain.

Belongs to the NrdR family. Requires Zn(2+) as cofactor.

Its function is as follows. Negatively regulates transcription of bacterial ribonucleotide reductase nrd genes and operons by binding to NrdR-boxes. The polypeptide is Transcriptional repressor NrdR (Fusobacterium nucleatum subsp. nucleatum (strain ATCC 25586 / DSM 15643 / BCRC 10681 / CIP 101130 / JCM 8532 / KCTC 2640 / LMG 13131 / VPI 4355)).